We begin with the raw amino-acid sequence, 414 residues long: 2,3-diketo-5-methylthiopentyl-1-phosphate enolase (414 aa).

Lys-99 (proton acceptor) is an active-site residue. Substrate-binding positions include Lys-148, 174–177 (KDDE), His-265, Gly-338, and 360–361 (GG). Lys-174, Asp-176, and Glu-177 together coordinate Mg(2+). An N6-carboxylysine modification is found at Lys-174.

It belongs to the RuBisCO large chain family. Type IV subfamily. As to quaternary structure, homodimer. Requires Mg(2+) as cofactor.

It carries out the reaction 5-methylsulfanyl-2,3-dioxopentyl phosphate = 2-hydroxy-5-methylsulfanyl-3-oxopent-1-enyl phosphate. It functions in the pathway amino-acid biosynthesis; L-methionine biosynthesis via salvage pathway; L-methionine from S-methyl-5-thio-alpha-D-ribose 1-phosphate: step 3/6. Catalyzes the enolization of 2,3-diketo-5-methylthiopentyl-1-phosphate (DK-MTP-1-P) into 2-hydroxy-3-keto-5-methylthiopentenyl-1-phosphate (HK-MTPenyl-1-P). The polypeptide is 2,3-diketo-5-methylthiopentyl-1-phosphate enolase (Bacillus cereus (strain Q1)).